The sequence spans 469 residues: 3-isopropylmalate dehydratase large subunit (469 aa).

[4Fe-4S] cluster contacts are provided by Cys350, Cys410, and Cys413.

It belongs to the aconitase/IPM isomerase family. LeuC type 1 subfamily. In terms of assembly, heterodimer of LeuC and LeuD. Requires [4Fe-4S] cluster as cofactor.

The catalysed reaction is (2R,3S)-3-isopropylmalate = (2S)-2-isopropylmalate. It functions in the pathway amino-acid biosynthesis; L-leucine biosynthesis; L-leucine from 3-methyl-2-oxobutanoate: step 2/4. Catalyzes the isomerization between 2-isopropylmalate and 3-isopropylmalate, via the formation of 2-isopropylmaleate. The sequence is that of 3-isopropylmalate dehydratase large subunit from Rhizobium johnstonii (strain DSM 114642 / LMG 32736 / 3841) (Rhizobium leguminosarum bv. viciae).